The primary structure comprises 459 residues: tRNA modification GTPase MnmE (459 aa).

Positions 29, 91, and 130 each coordinate (6S)-5-formyl-5,6,7,8-tetrahydrofolate. Positions 225-381 constitute a TrmE-type G domain; it reads GVKVAIVGRP…LEEALEQLVT (157 aa). K(+) is bound at residue N235. GTP is bound by residues 235 to 240, 254 to 260, and 279 to 282; these read NVGKSS, TDLPGTT, and DTAG. S239 lines the Mg(2+) pocket. T254, L256, and T259 together coordinate K(+). Position 260 (T260) interacts with Mg(2+). K459 lines the (6S)-5-formyl-5,6,7,8-tetrahydrofolate pocket.

The protein belongs to the TRAFAC class TrmE-Era-EngA-EngB-Septin-like GTPase superfamily. TrmE GTPase family. As to quaternary structure, homodimer. Heterotetramer of two MnmE and two MnmG subunits. It depends on K(+) as a cofactor.

It localises to the cytoplasm. Its function is as follows. Exhibits a very high intrinsic GTPase hydrolysis rate. Involved in the addition of a carboxymethylaminomethyl (cmnm) group at the wobble position (U34) of certain tRNAs, forming tRNA-cmnm(5)s(2)U34. The chain is tRNA modification GTPase MnmE from Synechococcus sp. (strain JA-2-3B'a(2-13)) (Cyanobacteria bacterium Yellowstone B-Prime).